The following is a 273-amino-acid chain: Transposable element Tcb2 transposase (273 aa).

It belongs to the transposase 5 family.

It is found in the nucleus. In terms of biological role, probably essential for transposable element Tcb2 transposition. The polypeptide is Transposable element Tcb2 transposase (Caenorhabditis briggsae).